We begin with the raw amino-acid sequence, 784 residues long: Lon protease (784 aa).

Residues 11 to 204 (IPVLPLRDVV…YLMAMMESEI (194 aa)) form the Lon N-terminal domain. 356-363 (GPPGVGKT) provides a ligand contact to ATP. Residues 592–773 (ENRVGQVTGL…EEVLALALQN (182 aa)) enclose the Lon proteolytic domain. Catalysis depends on residues Ser679 and Lys722.

Belongs to the peptidase S16 family. As to quaternary structure, homohexamer. Organized in a ring with a central cavity.

The protein localises to the cytoplasm. It carries out the reaction Hydrolysis of proteins in presence of ATP.. Functionally, ATP-dependent serine protease that mediates the selective degradation of mutant and abnormal proteins as well as certain short-lived regulatory proteins. Required for cellular homeostasis and for survival from DNA damage and developmental changes induced by stress. Degrades polypeptides processively to yield small peptide fragments that are 5 to 10 amino acids long. Binds to DNA in a double-stranded, site-specific manner. The sequence is that of Lon protease from Erwinia amylovora (Fire blight bacteria).